Reading from the N-terminus, the 1039-residue chain is Multidrug resistance protein MdtB (1039 aa).

A run of 11 helical transmembrane segments spans residues 15 to 37 (LFIM…GIIG), 345 to 362 (FELM…YLFL), 367 to 389 (ATII…MVFL), 396 to 418 (LTLM…VIEN), 438 to 460 (GEIG…PLLF), 472 to 494 (FAIT…TPMM), 535 to 557 (HPWL…WVFI), 866 to 888 (VWLI…ESFI), 908 to 930 (LMIA…IGIV), 967 to 989 (ILMT…GVGA), and 999 to 1021 (MVGG…YLLF).

Belongs to the resistance-nodulation-cell division (RND) (TC 2.A.6) family. MdtB subfamily. In terms of assembly, part of a tripartite efflux system composed of MdtA, MdtB and MdtC. MdtB forms a heteromultimer with MdtC.

It is found in the cell inner membrane. The chain is Multidrug resistance protein MdtB from Shigella flexneri.